We begin with the raw amino-acid sequence, 618 residues long: Protein fem-1 homolog C (618 aa).

7 ANK repeats span residues 2–31 (DLKT…DREV), 40–70 (NGAT…PVEL), 82–111 (EGAP…SVNN), 115–144 (TNST…DLEV), 148–177 (HGHT…DVNR), 181–210 (KGNT…SMEK), and 213–243 (YGMT…GLAE). 2 TPR repeats span residues 245-279 (ISAL…RHSE) and 337-370 (SYYI…QQSN). ANK repeat units follow at residues 482-524 (NGFS…DVNS) and 528-557 (DDNS…HFDS).

The protein belongs to the fem-1 family. In terms of assembly, component of a CRL2 E3 ubiquitin-protein ligase complex, also named ECS (Elongin BC-CUL2/5-SOCS-box protein) complex.

It participates in protein modification; protein ubiquitination. Substrate-recognition component of a Cul2-RING (CRL2) E3 ubiquitin-protein ligase complex of the DesCEND (destruction via C-end degrons) pathway, which recognizes a C-degron located at the extreme C terminus of target proteins, leading to their ubiquitination and degradation. The C-degron recognized by the DesCEND pathway is usually a motif of less than ten residues and can be present in full-length proteins, truncated proteins or proteolytically cleaved forms. The CRL2(FEM1C) complex specifically recognizes proteins with an arginine at the C-terminus: recognizes and binds proteins ending with -Lys/Arg-Xaa-Arg and -Lys/Arg-Xaa-Xaa-Arg C-degrons, leading to their ubiquitination and degradation. This Danio rerio (Zebrafish) protein is Protein fem-1 homolog C.